A 216-amino-acid polypeptide reads, in one-letter code: Adenylate kinase (216 aa).

10–15 lines the ATP pocket; the sequence is GAGKGT. The tract at residues 30–59 is NMP; that stretch reads STGDMFRAAMKAETELGLQAKSFIDKGALV. AMP is bound by residues Thr-31, Arg-36, 57-59, 85-88, and Gln-92; these read ALV and GFPR. The tract at residues 126 to 163 is LID; it reads GRRICKECGATYHLEFNPPAKADVCDKCGGELYQRSDD. Arg-127 provides a ligand contact to ATP. Positions 130 and 133 each coordinate Zn(2+). Residue 136 to 137 participates in ATP binding; sequence TY. Cys-150 and Cys-153 together coordinate Zn(2+). Arg-160 and Arg-171 together coordinate AMP. Gln-199 serves as a coordination point for ATP.

Belongs to the adenylate kinase family. Monomer.

It is found in the cytoplasm. The catalysed reaction is AMP + ATP = 2 ADP. The protein operates within purine metabolism; AMP biosynthesis via salvage pathway; AMP from ADP: step 1/1. In terms of biological role, catalyzes the reversible transfer of the terminal phosphate group between ATP and AMP. Plays an important role in cellular energy homeostasis and in adenine nucleotide metabolism. This Bacillus mycoides (strain KBAB4) (Bacillus weihenstephanensis) protein is Adenylate kinase.